The sequence spans 689 residues: UvrABC system protein C (689 aa).

One can recognise a GIY-YIG domain in the interval 16–95; the sequence is TNPGVYRFRD…IKEFAPRFNI (80 aa). The region spanning 208-243 is the UVR domain; the sequence is KPYIRELTRQMNEAAECMDFETAAARRDDVGALERV. The disordered stretch occupies residues 316–337; that stretch reads LAPAASGRRRTARHGSEDVVGQ.

This sequence belongs to the UvrC family. Interacts with UvrB in an incision complex.

It is found in the cytoplasm. Functionally, the UvrABC repair system catalyzes the recognition and processing of DNA lesions. UvrC both incises the 5' and 3' sides of the lesion. The N-terminal half is responsible for the 3' incision and the C-terminal half is responsible for the 5' incision. The protein is UvrABC system protein C of Kocuria rhizophila (strain ATCC 9341 / DSM 348 / NBRC 103217 / DC2201).